A 516-amino-acid chain; its full sequence is Polyprenol-phosphate-mannose--protein mannosyltransferase (516 aa).

Helical transmembrane passes span 113–133, 143–163, 166–186, 234–254, 275–295, 384–404, 413–433, 437–457, and 473–493; these read YNGLGWRFSGAVCGVIIVMLV, STLVGAIAGLLIIADGVSFVS, TALLDVFLVMFAVAAFACLMV, WSGLYFVLFFGVMTLVFDAIA, AAYVFGLIPFAVYLASYAPWF, VMLVGTPAMWFIAVPVLGWAL, WRYGAVLVGYMAGFLPWFADI, MYFFYATVMAPFLVLAIALIL, and LGLLTVCFYVALVITNFAWMY.

This sequence belongs to the glycosyltransferase 39 family.

It localises to the cell membrane. It functions in the pathway protein modification; protein glycosylation. In terms of biological role, protein O-mannosyltransferase that catalyzes the transfer of a single mannose residue from a polyprenol phospho-mannosyl lipidic donor to the hydroxyl group of selected serine and threonine residues in acceptor proteins. In Mycolicibacterium smegmatis (strain ATCC 700084 / mc(2)155) (Mycobacterium smegmatis), this protein is Polyprenol-phosphate-mannose--protein mannosyltransferase.